The primary structure comprises 218 residues: MTQDEMKKAAGWAALKYVEKGSIVGVGTGSTVNHFIDALGTMSEEIKGAVSSSVASTEKLEALGIKIFDCNEVASLDIYVDGADEINADREMIKGGGAALTREKIVAAIADKFICIVDGTKAVDVLGTFPLPVEVIPMARSYVARQLVKLGGDPCYREGVITDNGNVILDVYGMKITNPKQLEDQINGIPGVVTVGLFAHRGADVVITGTPEGAKIEE.

Residues 28-31 (TGST), 81-84 (DGAD), and 94-97 (KGGG) each bind substrate. Glutamate 103 (proton acceptor) is an active-site residue. Lysine 121 contributes to the substrate binding site.

Belongs to the ribose 5-phosphate isomerase family. As to quaternary structure, homodimer.

It catalyses the reaction aldehydo-D-ribose 5-phosphate = D-ribulose 5-phosphate. It participates in carbohydrate degradation; pentose phosphate pathway; D-ribose 5-phosphate from D-ribulose 5-phosphate (non-oxidative stage): step 1/1. Its function is as follows. Catalyzes the reversible conversion of ribose-5-phosphate to ribulose 5-phosphate. The polypeptide is Ribose-5-phosphate isomerase A (Vibrio vulnificus (strain CMCP6)).